An 89-amino-acid polypeptide reads, in one-letter code: Small ribosomal subunit protein uS15 (89 aa).

It belongs to the universal ribosomal protein uS15 family. In terms of assembly, part of the 30S ribosomal subunit. Forms a bridge to the 50S subunit in the 70S ribosome, contacting the 23S rRNA.

Its function is as follows. One of the primary rRNA binding proteins, it binds directly to 16S rRNA where it helps nucleate assembly of the platform of the 30S subunit by binding and bridging several RNA helices of the 16S rRNA. Forms an intersubunit bridge (bridge B4) with the 23S rRNA of the 50S subunit in the ribosome. In Orientia tsutsugamushi (strain Ikeda) (Rickettsia tsutsugamushi), this protein is Small ribosomal subunit protein uS15.